Reading from the N-terminus, the 224-residue chain is Protein DCL, chloroplastic (224 aa).

A chloroplast-targeting transit peptide spans 1-50; the sequence is MASICTSNFHFLCRKNNSSPISHHLLLSPSSLSFSRCGGLRLCRCAAVKT. Positions 76–98 are disordered; sequence TTSESEELVKEESDDEVGKKSGD. Over residues 82 to 98 the composition is skewed to basic and acidic residues; the sequence is ELVKEESDDEVGKKSGD.

The protein resides in the plastid. The protein localises to the chloroplast. In terms of biological role, has a function in the early stage of chloroplast development and palisade cell morphogenesis. Required for correct plastid ribosome assembly. Required for processing and maturation of 4.5S rRNA. The polypeptide is Protein DCL, chloroplastic (DCL) (Solanum lycopersicum (Tomato)).